A 160-amino-acid chain; its full sequence is V-type proton ATPase subunit c (160 aa).

The Lumenal segment spans residues 1 to 6 (MSDLCP). A helical transmembrane segment spans residues 7 to 27 (VYAPFFGSIGCAAAIVFTCFG). Topologically, residues 28 to 53 (ASYGTAKSGVGICATSVTRPDLLVKN) are cytoplasmic. Residues 54-74 (VVPVVMAGIIAIYGLVVSVLV) form a helical membrane-spanning segment. The Lumenal portion of the chain corresponds to 75 to 90 (SDSLSQKQALYTGFIQ). The chain crosses the membrane as a helical span at residues 91-111 (LGAGLSVGLSGLAAGFAIGIV). Topologically, residues 112–129 (GDAGVRGTAQQPRLFVGM) are cytoplasmic. The chain crosses the membrane as a helical span at residues 130 to 150 (ILILIFAEVLGLYGLIVALLL). Residues 151–160 (NSRASQDVTC) are Lumenal-facing.

It belongs to the V-ATPase proteolipid subunit family. In terms of assembly, V-ATPase is a heteromultimeric enzyme composed of a peripheral catalytic V1 complex (components A to H) attached to an integral membrane V0 proton pore complex (components: a, c, c', c'', d, e, f and VOA1). The decameric c-ring forms the proton-conducting pore, and is composed of eight proteolipid subunits c, one subunit c' and one subunit c''.

It localises to the vacuole membrane. Proton-conducting pore forming subunit of the V0 complex of vacuolar(H+)-ATPase (V-ATPase), a multisubunit enzyme composed of a peripheral complex (V1) that hydrolyzes ATP and a membrane integral complex (V0) that translocates protons. V-ATPase is responsible for acidifying and maintaining the pH of intracellular compartments. The sequence is that of V-type proton ATPase subunit c (VMA3) from Candida tropicalis (Yeast).